The primary structure comprises 162 residues: Urease subunit beta (162 aa).

Positions 116 to 162 (WRRSSAAGDAPQELPQVEAAERGRKLDDATDVDTNVGTEEGFEEGRN) are disordered. Positions 134 to 143 (AAERGRKLDD) are enriched in basic and acidic residues.

It belongs to the urease beta subunit family. As to quaternary structure, heterotrimer of UreA (gamma), UreB (beta) and UreC (alpha) subunits. Three heterotrimers associate to form the active enzyme.

The protein resides in the cytoplasm. The enzyme catalyses urea + 2 H2O + H(+) = hydrogencarbonate + 2 NH4(+). Its pathway is nitrogen metabolism; urea degradation; CO(2) and NH(3) from urea (urease route): step 1/1. In Corynebacterium glutamicum (strain ATCC 13032 / DSM 20300 / JCM 1318 / BCRC 11384 / CCUG 27702 / LMG 3730 / NBRC 12168 / NCIMB 10025 / NRRL B-2784 / 534), this protein is Urease subunit beta.